The primary structure comprises 259 residues: Complement factor D (259 aa).

The signal sequence occupies residues 1–21 (MADRSGHLAALILLGAAVCVA). A propeptide spans 22–26 (QPRGR) (activation peptide). A Peptidase S1 domain is found at 27 to 254 (ILGGQEAKSH…YVAWIDGVMA (228 aa)). Cys52 and Cys68 form a disulfide bridge. Catalysis depends on charge relay system residues His67 and Asp115. Disulfide bonds link Cys149–Cys215, Cys180–Cys196, and Cys205–Cys230. Residue Ser209 is the Charge relay system of the active site. The tract at residues 224-228 (TSGSR) is self-inhibitor loop.

This sequence belongs to the peptidase S1 family. CFD is activated by the removal of 5 residues at the N-terminus, named activation peptide, by the MASP-3 isoform of MASP1.

It is found in the secreted. The catalysed reaction is Selective cleavage of Arg-|-Lys bond in complement factor B when in complex with complement subcomponent C3b or with cobra venom factor.. Its activity is regulated as follows. Circulates in plasma in a mature but self-inhibited form. Activated by factor B (CFB), which displaces the self-inhibition loop. Associates with CFB complexed with complement C3b. Functionally, serine protease that initiates the alternative pathway of the complement system, a cascade of proteins that leads to phagocytosis and breakdown of pathogens and signaling that strengthens the adaptive immune system. In contrast to other complement pathways (classical, lectin and GZMK) that are directly activated by pathogens or antigen-antibody complexes, the alternative complement pathway is initiated by the spontaneous hydrolysis of complement C3. The alternative complement pathway acts as an amplification loop that enhances complement activation by mediating the formation of C3 and C5 convertases. Activated CFD cleaves factor B (CFB) when the latter is complexed with complement C3b, activating the C3 convertase of the alternative pathway. This is Complement factor D (CFD) from Sus scrofa (Pig).